We begin with the raw amino-acid sequence, 94 residues long: Ribonuclease P protein component 1 (94 aa).

The protein belongs to the eukaryotic/archaeal RNase P protein component 1 family. As to quaternary structure, consists of a catalytic RNA component and at least 4-5 protein subunits.

The protein resides in the cytoplasm. The enzyme catalyses Endonucleolytic cleavage of RNA, removing 5'-extranucleotides from tRNA precursor.. Part of ribonuclease P, a protein complex that generates mature tRNA molecules by cleaving their 5'-ends. This chain is Ribonuclease P protein component 1, found in Thermofilum pendens (strain DSM 2475 / Hrk 5).